Reading from the N-terminus, the 143-residue chain is Ribosome maturation factor RimP (143 aa).

It belongs to the RimP family.

It is found in the cytoplasm. In terms of biological role, required for maturation of 30S ribosomal subunits. The protein is Ribosome maturation factor RimP of Neisseria gonorrhoeae (strain ATCC 700825 / FA 1090).